Here is a 294-residue protein sequence, read N- to C-terminus: Beta-glucoside kinase (294 aa).

5-11 (AFDIGGT) is an ATP binding site.

It belongs to the ROK (NagC/XylR) family.

The enzyme catalyses D-cellobiose + ATP = 6-phospho-beta-D-glucosyl-(1-&gt;4)-D-glucose + ADP + H(+). In terms of biological role, catalyzes the ATP-dependent phosphorylation of cellobiose to produce cellobiose-6'-P. May have a dual role of kinase and transcriptional regulator of the cellobiose-PTS operon. This Listeria innocua serovar 6a (strain ATCC BAA-680 / CLIP 11262) protein is Beta-glucoside kinase (bglK).